Reading from the N-terminus, the 177-residue chain is Putative thioredoxin peroxidase (177 aa).

The region spanning 1–158 (MFPKTLTDSK…IIRLIDAITF (158 aa)) is the Thioredoxin domain. Cysteine 45 functions as the Cysteine sulfenic acid (-SOH) intermediate in the catalytic mechanism.

It belongs to the peroxiredoxin family. AhpC/Prx1 subfamily. In terms of assembly, homodimer; disulfide-linked, upon oxidation.

It carries out the reaction a hydroperoxide + [thioredoxin]-dithiol = an alcohol + [thioredoxin]-disulfide + H2O. Its function is as follows. Thiol-specific peroxidase that catalyzes the reduction of hydrogen peroxide and organic hydroperoxides to water and alcohols, respectively. Plays a role in cell protection against oxidative stress by detoxifying peroxides and as sensor of hydrogen peroxide-mediated signaling events. This Encephalitozoon cuniculi (strain GB-M1) (Microsporidian parasite) protein is Putative thioredoxin peroxidase.